The following is a 159-amino-acid chain: Large ribosomal subunit protein uL10 (159 aa).

Belongs to the universal ribosomal protein uL10 family. In terms of assembly, part of the ribosomal stalk of the 50S ribosomal subunit. The N-terminus interacts with L11 and the large rRNA to form the base of the stalk. The C-terminus forms an elongated spine to which L12 dimers bind in a sequential fashion forming a multimeric L10(L12)X complex.

Forms part of the ribosomal stalk, playing a central role in the interaction of the ribosome with GTP-bound translation factors. This is Large ribosomal subunit protein uL10 from Campylobacter lari (strain RM2100 / D67 / ATCC BAA-1060).